The primary structure comprises 213 residues: Type II restriction enzyme BamHI (213 aa).

Mg(2+)-binding residues include Glu77, Asp94, Glu111, and Phe112. The active-site Proton acceptor is Glu113.

As to quaternary structure, homodimer. Mg(2+) is required as a cofactor.

It catalyses the reaction Endonucleolytic cleavage of DNA to give specific double-stranded fragments with terminal 5'-phosphates.. Functionally, a P subtype restriction enzyme that recognizes the double-stranded sequence 5'-GGATCC-3' and cleaves after G-1. The polypeptide is Type II restriction enzyme BamHI (Bacillus amyloliquefaciens (Bacillus velezensis)).